Consider the following 513-residue polypeptide: ATP synthase subunit alpha (513 aa).

169–176 serves as a coordination point for ATP; that stretch reads GDRQIGKT.

Belongs to the ATPase alpha/beta chains family. As to quaternary structure, F-type ATPases have 2 components, CF(1) - the catalytic core - and CF(0) - the membrane proton channel. CF(1) has five subunits: alpha(3), beta(3), gamma(1), delta(1), epsilon(1). CF(0) has three main subunits: a(1), b(2) and c(9-12). The alpha and beta chains form an alternating ring which encloses part of the gamma chain. CF(1) is attached to CF(0) by a central stalk formed by the gamma and epsilon chains, while a peripheral stalk is formed by the delta and b chains.

It is found in the cell inner membrane. The enzyme catalyses ATP + H2O + 4 H(+)(in) = ADP + phosphate + 5 H(+)(out). In terms of biological role, produces ATP from ADP in the presence of a proton gradient across the membrane. The alpha chain is a regulatory subunit. The chain is ATP synthase subunit alpha from Shewanella woodyi (strain ATCC 51908 / MS32).